Reading from the N-terminus, the 156-residue chain is Protein-export protein SecB (156 aa).

This sequence belongs to the SecB family. As to quaternary structure, homotetramer, a dimer of dimers. One homotetramer interacts with 1 SecA dimer.

The protein resides in the cytoplasm. Functionally, one of the proteins required for the normal export of preproteins out of the cell cytoplasm. It is a molecular chaperone that binds to a subset of precursor proteins, maintaining them in a translocation-competent state. It also specifically binds to its receptor SecA. The polypeptide is Protein-export protein SecB (Pectobacterium carotovorum subsp. carotovorum (strain PC1)).